Consider the following 389-residue polypeptide: AIAAVITFLILFTIFGNALVILAVLTSRSLRAPQNLFLVSLAAADILVATLIIPFSLANELLGYWYFWRTWCEVYLALDVLFCTSSIVHLCAISLDRYWAVSRALEYNSKRTPRRIKCIILTVWLIAAAISLPPLIYKGDQGPQPRGRPQCMLNQEAWYILSSSIGSFFAPCLIMILVYLRIYLIAKRSNRRGPRAKGAPGEGESKQPHPLTAGPLALANPPTLATSLAVDGEANGHSKLTGEKERETSEDPGTPTLQRSWPVLPSSGQSQKKGVCGASPEEEAEGEEEGSRPLSVPASPASACGPHLQQPQGSQVLATLRGQVLLGRGVGAAGGQWWRRRAQLTREKRFTFVLTVVIGVFVLCWFPFFFSYSLGAICPQHCKVPHGLF.

A helical transmembrane segment spans residues 1–25 (AIAAVITFLILFTIFGNALVILAVL). The Cytoplasmic segment spans residues 26-36 (TSRSLRAPQNL). A helical transmembrane segment spans residues 37 to 62 (FLVSLAAADILVATLIIPFSLANELL). The Extracellular portion of the chain corresponds to 63–72 (GYWYFWRTWC). Residues Cys-72 and Cys-151 are joined by a disulfide bond. The chain crosses the membrane as a helical span at residues 73–95 (EVYLALDVLFCTSSIVHLCAISL). Residues 96 to 117 (DRYWAVSRALEYNSKRTPRRIK) are Cytoplasmic-facing. A helical transmembrane segment spans residues 118-140 (CIILTVWLIAAAISLPPLIYKGD). Topologically, residues 141 to 156 (QGPQPRGRPQCMLNQE) are extracellular. Residues 157-180 (AWYILSSSIGSFFAPCLIMILVYL) form a helical membrane-spanning segment. Topologically, residues 181-353 (RIYLIAKRSN…LTREKRFTFV (173 aa)) are cytoplasmic. 2 disordered regions span residues 192–218 (RGPR…PLAL) and 231–310 (DGEA…HLQQ). Basic and acidic residues predominate over residues 234–249 (ANGHSKLTGEKERETS). A helical transmembrane segment spans residues 354 to 377 (LTVVIGVFVLCWFPFFFSYSLGAI). Topologically, residues 378–386 (CPQHCKVPH) are extracellular. The chain crosses the membrane as a helical span at residues 387-389 (GLF).

It belongs to the G-protein coupled receptor 1 family. Adrenergic receptor subfamily. ADRA2B sub-subfamily. Interacts with RAB26. Interacts with PPP1R9B.

The protein localises to the cell membrane. Alpha-2 adrenergic receptors mediate the catecholamine-induced inhibition of adenylate cyclase through the action of G proteins. In Procavia capensis habessinica (Abyssinian hyrax), this protein is Alpha-2B adrenergic receptor (ADRA2B).